A 555-amino-acid chain; its full sequence is CTP synthase (555 aa).

The interval 1 to 271 (MVKRGKKTKY…DDKLAELFNI (271 aa)) is amidoligase domain. S19 contacts CTP. S19 provides a ligand contact to UTP. ATP is bound by residues 20–25 (SLGKGL) and D77. The Mg(2+) site is built by D77 and E145. Residues 152-154 (DIE), 192-197 (KTKPTQ), and K228 contribute to the CTP site. Residues 192–197 (KTKPTQ) and K228 contribute to the UTP site. The Glutamine amidotransferase type-1 domain maps to 297–537 (RIGIVGKYVE…VKAALEHRDA (241 aa)). G358 provides a ligand contact to L-glutamine. C385 acts as the Nucleophile; for glutamine hydrolysis in catalysis. L-glutamine contacts are provided by residues 386 to 389 (LGLQ), E409, and R466. Active-site residues include H510 and E512. The interval 535–555 (RDAQQRQPPAEVKKLAVGKNG) is disordered.

Belongs to the CTP synthase family. In terms of assembly, homotetramer.

The enzyme catalyses UTP + L-glutamine + ATP + H2O = CTP + L-glutamate + ADP + phosphate + 2 H(+). The catalysed reaction is L-glutamine + H2O = L-glutamate + NH4(+). It carries out the reaction UTP + NH4(+) + ATP = CTP + ADP + phosphate + 2 H(+). It participates in pyrimidine metabolism; CTP biosynthesis via de novo pathway; CTP from UDP: step 2/2. Allosterically activated by GTP, when glutamine is the substrate; GTP has no effect on the reaction when ammonia is the substrate. The allosteric effector GTP functions by stabilizing the protein conformation that binds the tetrahedral intermediate(s) formed during glutamine hydrolysis. Inhibited by the product CTP, via allosteric rather than competitive inhibition. Functionally, catalyzes the ATP-dependent amination of UTP to CTP with either L-glutamine or ammonia as the source of nitrogen. Regulates intracellular CTP levels through interactions with the four ribonucleotide triphosphates. The chain is CTP synthase from Anaeromyxobacter dehalogenans (strain 2CP-1 / ATCC BAA-258).